Reading from the N-terminus, the 705-residue chain is Elongation factor G (705 aa).

The region spanning His-7–Leu-287 is the tr-type G domain. Residues Ala-16–Thr-23, Asp-84–His-88, and Asn-138–Asp-141 each bind GTP. The disordered stretch occupies residues Val-293–Lys-312. Residues Glu-302–Lys-312 are compositionally biased toward basic and acidic residues.

The protein belongs to the TRAFAC class translation factor GTPase superfamily. Classic translation factor GTPase family. EF-G/EF-2 subfamily.

The protein resides in the cytoplasm. Its function is as follows. Catalyzes the GTP-dependent ribosomal translocation step during translation elongation. During this step, the ribosome changes from the pre-translocational (PRE) to the post-translocational (POST) state as the newly formed A-site-bound peptidyl-tRNA and P-site-bound deacylated tRNA move to the P and E sites, respectively. Catalyzes the coordinated movement of the two tRNA molecules, the mRNA and conformational changes in the ribosome. The chain is Elongation factor G from Phocaeicola vulgatus (strain ATCC 8482 / DSM 1447 / JCM 5826 / CCUG 4940 / NBRC 14291 / NCTC 11154) (Bacteroides vulgatus).